The primary structure comprises 318 residues: Death effector domain-containing protein (318 aa).

Residues 25 to 103 form the DED domain; that stretch reads SLHRMFDIVG…RHDLLPYVTL (79 aa). The disordered stretch occupies residues 128–191; that stretch reads PRALSDPEPR…SVTPDPKEKQ (64 aa).

Interacts with CASP8, CASP10, KRT8, KRT18, CASP3 and FADD. Homodimerizes and heterodimerizes with DEDD2. Exists predominantly in a mono- or diubiquitinated form. As to expression, widely expressed with highest levels in testis. Within the testis, highly expressed in germ cells but not expressed in Sertoli cells.

The protein resides in the cytoplasm. Its subcellular location is the nucleus. It localises to the nucleolus. Functionally, a scaffold protein that directs CASP3 to certain substrates and facilitates their ordered degradation during apoptosis. May also play a role in mediating CASP3 cleavage of KRT18. Regulates degradation of intermediate filaments during apoptosis. May play a role in the general transcription machinery in the nucleus and might be an important regulator of the activity of GTF3C3. Inhibits DNA transcription in vitro. The protein is Death effector domain-containing protein (Dedd) of Rattus norvegicus (Rat).